Here is a 302-residue protein sequence, read N- to C-terminus: Probable alpha-L-glutamate ligase (302 aa).

Positions 112-294 (LQLLLKAGIP…IAAEIIDYIE (183 aa)) constitute an ATP-grasp domain. ATP is bound by residues K148, 185–186 (DF), D194, and 218–220 (RAN). 3 residues coordinate Mg(2+): D255, E267, and N269. Mn(2+) contacts are provided by D255, E267, and N269.

It belongs to the RimK family. Mg(2+) serves as cofactor. It depends on Mn(2+) as a cofactor.

The polypeptide is Probable alpha-L-glutamate ligase (Haemophilus influenzae (strain ATCC 51907 / DSM 11121 / KW20 / Rd)).